The chain runs to 383 residues: Putative glutamate--cysteine ligase 2 (383 aa).

This sequence belongs to the glutamate--cysteine ligase type 2 family. YbdK subfamily.

It catalyses the reaction L-cysteine + L-glutamate + ATP = gamma-L-glutamyl-L-cysteine + ADP + phosphate + H(+). In terms of biological role, ATP-dependent carboxylate-amine ligase which exhibits weak glutamate--cysteine ligase activity. This is Putative glutamate--cysteine ligase 2 from Clavibacter sepedonicus (Clavibacter michiganensis subsp. sepedonicus).